We begin with the raw amino-acid sequence, 313 residues long: Porphobilinogen deaminase (313 aa).

At Cys242 the chain carries S-(dipyrrolylmethanemethyl)cysteine.

Belongs to the HMBS family. In terms of assembly, monomer. The cofactor is dipyrromethane.

The enzyme catalyses 4 porphobilinogen + H2O = hydroxymethylbilane + 4 NH4(+). It participates in porphyrin-containing compound metabolism; protoporphyrin-IX biosynthesis; coproporphyrinogen-III from 5-aminolevulinate: step 2/4. In terms of biological role, tetrapolymerization of the monopyrrole PBG into the hydroxymethylbilane pre-uroporphyrinogen in several discrete steps. This is Porphobilinogen deaminase from Pseudomonas putida (strain ATCC 47054 / DSM 6125 / CFBP 8728 / NCIMB 11950 / KT2440).